The primary structure comprises 178 residues: PEST proteolytic signal-containing nuclear protein (178 aa).

A compositionally biased stretch (basic and acidic residues) spans 1–15 (MADGKAGEEKPEKSQ). Residues 1-84 (MADGKAGEEK…IGSQTTKKAS (84 aa)) form a disordered region. Alanine 2 is subject to N-acetylalanine. Residues 37–47 (SSSNGGESSSR) show a composition bias toward low complexity. Serine 53 carries the post-translational modification Phosphoserine. Position 64 is an N6-acetyllysine (lysine 64). 3 positions are modified to phosphoserine: serine 77, serine 87, and serine 119. Residues 134 to 178 (NIGRDTPTSAGPNSFNKGKHGFSDNQKLWERNIKSHLGNVHDQDN) are disordered. Position 139 is a phosphothreonine (threonine 139). Polar residues predominate over residues 139 to 149 (TPTSAGPNSFN). At serine 147 the chain carries Phosphoserine. Residues lysine 150 and lysine 152 each carry the N6-acetyllysine modification. The span at 160–178 (KLWERNIKSHLGNVHDQDN) shows a compositional bias: basic and acidic residues.

As to quaternary structure, interacts with UHRF2/NIRF. Post-translationally, ubiquitinated; mediated by UHRF2 and leading to its subsequent proteasomal degradation. In terms of processing, N-terminally acetylated in a HYPK-dependent manner by the NatA acetyltransferase complex which is composed of NAA10 and NAA15.

It localises to the nucleus. Its function is as follows. May be involved in cell cycle regulation. The sequence is that of PEST proteolytic signal-containing nuclear protein (PCNP) from Pongo abelii (Sumatran orangutan).